The primary structure comprises 219 residues: Inner membrane protein YghB (219 aa).

Residues 1-17 (MAVIQDIIAALWQHDFA) lie on the Cytoplasmic side of the membrane. The helical transmembrane segment at 18–38 (ALANPHVVSVVYFVMFATLFL) threads the bilayer. The Periplasmic segment spans residues 39 to 67 (ENGLLPASFLPGDSLLLLAGALIAQDVMH). A helical membrane pass occupies residues 68–88 (FLPTIGILTAAASLGCWLSYI). Residues 89-160 (QGRWLGNTRT…RRFQFFNWLS (72 aa)) lie on the Cytoplasmic side of the membrane. The chain crosses the membrane as a helical span at residues 161-181 (GLLWVTVVTSFGYALSMIPFV). Over 182–191 (KRHEDQVMTF) the chain is Periplasmic. Residues 192–212 (LMILPVALLVAGLLGTLVVVI) form a helical membrane-spanning segment. The Cytoplasmic portion of the chain corresponds to 213 to 219 (KKKYCNA).

This sequence belongs to the DedA family.

The protein localises to the cell inner membrane. The sequence is that of Inner membrane protein YghB (yghB) from Salmonella typhimurium (strain LT2 / SGSC1412 / ATCC 700720).